Reading from the N-terminus, the 348-residue chain is Dihydroorotase (348 aa).

Zn(2+) is bound by residues histidine 14 and histidine 16. Residues 16–18 and asparagine 42 contribute to the substrate site; that span reads HLR. Zn(2+) contacts are provided by lysine 100, histidine 137, and histidine 175. An N6-carboxylysine modification is found at lysine 100. Substrate is bound at residue histidine 137. Leucine 220 contributes to the substrate binding site. Aspartate 248 provides a ligand contact to Zn(2+). Aspartate 248 is a catalytic residue. Histidine 252 and alanine 264 together coordinate substrate.

Belongs to the metallo-dependent hydrolases superfamily. DHOase family. Class II DHOase subfamily. As to quaternary structure, homodimer. Zn(2+) is required as a cofactor.

It catalyses the reaction (S)-dihydroorotate + H2O = N-carbamoyl-L-aspartate + H(+). The protein operates within pyrimidine metabolism; UMP biosynthesis via de novo pathway; (S)-dihydroorotate from bicarbonate: step 3/3. Functionally, catalyzes the reversible cyclization of carbamoyl aspartate to dihydroorotate. This chain is Dihydroorotase, found in Pseudomonas fluorescens (strain Pf0-1).